We begin with the raw amino-acid sequence, 438 residues long: Battenin (438 aa).

The disordered stretch occupies residues 1–25 (MGGCAGSRRRLSDSEGEETVPEPRL). Over 1–37 (MGGCAGSRRRLSDSEGEETVPEPRLPLLDHQGAHWKN) the chain is Cytoplasmic. Phosphoserine is present on residues serine 12 and serine 14. A helical transmembrane segment spans residues 38–58 (AVGFWLLGLCNNFSYVVMLSA). The Lumenal segment spans residues 59 to 127 (AHDILSHERT…GLHLLPYSPR (69 aa)). N-linked (GlcNAc...) asparagine glycans are attached at residues asparagine 71 and asparagine 85. Residues 128-148 (VLVSGICAAGSFVLVAFSHSV) form a helical membrane-spanning segment. Residues 149–151 (GTS) are Cytoplasmic-facing. A helical transmembrane segment spans residues 152-172 (LCGVVLASISSGLGEVTFLSL). The Lumenal segment spans residues 173–182 (TAFYPRAVIS). The helical transmembrane segment at 183–203 (WWSSGTGGAGLLGALSYLGLT) threads the bilayer. Over 204 to 277 (QAGLSPQQTL…SLSLRERWTV (74 aa)) the chain is Cytoplasmic. Residues 237–268 (QDPGGEEEAESSARQPLIRTEAPESKPGSSSS) form a disordered region. A Lysosomal targeting motif motif is present at residues 242 to 244 (EEE). The Lysosomal targeting motif. Required for AP1G1, AP2A2 and AP3D1 interaction motif lies at 253-254 (LI). A helical membrane pass occupies residues 278-298 (FKGLLWYIVPLVVVYFAEYFI). Topologically, residues 299-346 (NQGLFELLFFRNTSLSHAQQYRWYQMLYQAGVFASRSSLRCCHIRFTW) are lumenal. Asparagine 310 carries N-linked (GlcNAc...) asparagine glycosylation. The chain crosses the membrane as a helical span at residues 347–367 (ALALLQCLNLAFLLADVWFGF). The Cytoplasmic segment spans residues 368-438 (LLSIYFVFLI…PLHDFLCQLS (71 aa)). The short motif at 409–419 (MATTCISDTLG) is the Lysosomal targeting motif element. Cysteine 435 is subject to Cysteine methyl ester. Residue cysteine 435 is the site of S-farnesyl cysteine attachment. A propeptide spans 436 to 438 (QLS) (removed in mature form).

Belongs to the battenin family. In terms of assembly, interacts with DCTN1, KIF3A, RAB7A and RILP. Interacts with CLN5. Post-translationally, highly glycosylated. Farnesylation is important for trafficking to lysosomes.

It is found in the lysosome membrane. The protein localises to the late endosome. Its subcellular location is the lysosome. Mediates microtubule-dependent, anterograde transport connecting the Golgi network, endosomes, autophagosomes, lysosomes and plasma membrane, and participates in several cellular processes such as regulation of lysosomal pH, lysosome protein degradation, receptor-mediated endocytosis, autophagy, transport of proteins and lipids from the TGN, apoptosis and synaptic transmission. Facilitates the proteins transport from trans-Golgi network (TGN)-to other membrane compartments such as transport of microdomain-associated proteins to the plasma membrane, IGF2R transport to the lysosome where it regulates the CTSD release leading to regulation of CTSD maturation and thereby APP intracellular processing. Moreover regulates CTSD activity in response to osmotic stress. Also binds galactosylceramide and transports it from the trans Golgi to the rafts, which may have immediate and downstream effects on cell survival by modulating ceramide synthesis. At the plasma membrane, regulates actin-dependent events including filopodia formation, cell migration, and pinocytosis through ARF1-CDC42 pathway and also the cytoskeleton organization through interaction with MYH10 and fodrin leading to the regulation of the plasma membrane association of Na+, K+ ATPase complex. Regulates synaptic transmission in the amygdala, hippocampus, and cerebellum through regulation of synaptic vesicles density and their proximity to active zones leading to modulation of short-term plasticity and age-dependent anxious behavior, learning and memory. Regulates autophagic vacuoles (AVs) maturation by modulating the trafficking between endocytic and autophagolysosomal/lysosomal compartments, which involves vesicle fusion leading to regulation of degradation process. Also participates in cellular homeostasis of compounds such as, water, ions, amino acids, proteins and lipids in several tissue namely in brain and kidney through regulation of their transport and synthesis. This Macaca fascicularis (Crab-eating macaque) protein is Battenin.